The chain runs to 160 residues: Cytochrome b6-f complex subunit 4 (160 aa).

The next 3 membrane-spanning stretches (helical) occupy residues 36–56 (LLYIFPVVILGTIACNVGLAV), 95–115 (LLGVLLMVSVPAGLLTVPFLE), and 131–151 (TVFLIGTAVALWLGIGATLPI).

The protein belongs to the cytochrome b family. PetD subfamily. In terms of assembly, the 4 large subunits of the cytochrome b6-f complex are cytochrome b6, subunit IV (17 kDa polypeptide, petD), cytochrome f and the Rieske protein, while the 4 small subunits are petG, petL, petM and petN. The complex functions as a dimer.

It is found in the plastid. Its subcellular location is the chloroplast thylakoid membrane. Component of the cytochrome b6-f complex, which mediates electron transfer between photosystem II (PSII) and photosystem I (PSI), cyclic electron flow around PSI, and state transitions. The chain is Cytochrome b6-f complex subunit 4 from Solanum bulbocastanum (Wild potato).